Consider the following 246-residue polypeptide: Small ribosomal subunit protein uS3 (246 aa).

The 80-residue stretch at 19 to 98 (IDEWLAQNFY…NPMLDARVQA (80 aa)) folds into the KH type-2 domain. The disordered stretch occupies residues 218–246 (LQEETASTLREHMEAARPGEEHEEDREES). A compositionally biased stretch (basic and acidic residues) spans 226–237 (LREHMEAARPGE).

This sequence belongs to the universal ribosomal protein uS3 family. As to quaternary structure, part of the 30S ribosomal subunit.

Its function is as follows. Binds the lower part of the 30S subunit head. The protein is Small ribosomal subunit protein uS3 of Aeropyrum pernix (strain ATCC 700893 / DSM 11879 / JCM 9820 / NBRC 100138 / K1).